The following is a 307-amino-acid chain: Glutathione synthetase (307 aa).

The 185-residue stretch at 120-304 (KLGALRFSRW…LADQTIERLR (185 aa)) folds into the ATP-grasp domain. 146–202 (AREQGDVVLKPLGGRAGLGVIRVQAEAPGLKALLELVTEQERLPVMAQRFLPDVTEG) contacts ATP. Residues Glu275 and Asn277 each coordinate Mg(2+).

It belongs to the prokaryotic GSH synthase family. Requires Mg(2+) as cofactor. It depends on Mn(2+) as a cofactor.

It catalyses the reaction gamma-L-glutamyl-L-cysteine + glycine + ATP = glutathione + ADP + phosphate + H(+). It functions in the pathway sulfur metabolism; glutathione biosynthesis; glutathione from L-cysteine and L-glutamate: step 2/2. This Parasynechococcus marenigrum (strain WH8102) protein is Glutathione synthetase.